The sequence spans 252 residues: Probable phosphatase Shewmr4_2619 (252 aa).

Zn(2+) contacts are provided by His-8, His-10, His-16, His-41, Glu-74, His-102, His-132, Asp-193, and His-195.

It belongs to the PHP family. It depends on Zn(2+) as a cofactor.

The polypeptide is Probable phosphatase Shewmr4_2619 (Shewanella sp. (strain MR-4)).